Here is a 142-residue protein sequence, read N- to C-terminus: ATP synthase epsilon chain (142 aa).

Belongs to the ATPase epsilon chain family. As to quaternary structure, F-type ATPases have 2 components, CF(1) - the catalytic core - and CF(0) - the membrane proton channel. CF(1) has five subunits: alpha(3), beta(3), gamma(1), delta(1), epsilon(1). CF(0) has three main subunits: a, b and c.

It is found in the cell inner membrane. Its function is as follows. Produces ATP from ADP in the presence of a proton gradient across the membrane. The chain is ATP synthase epsilon chain from Shewanella pealeana (strain ATCC 700345 / ANG-SQ1).